Reading from the N-terminus, the 356-residue chain is tRNA N6-adenosine threonylcarbamoyltransferase (356 aa).

Residues histidine 115 and histidine 119 each contribute to the Fe cation site. Residues 138-142, aspartate 171, glycine 184, and asparagine 283 contribute to the substrate site; that span reads LVSGG. A Fe cation-binding site is contributed by aspartate 311.

It belongs to the KAE1 / TsaD family. The cofactor is Fe(2+).

It is found in the cytoplasm. It carries out the reaction L-threonylcarbamoyladenylate + adenosine(37) in tRNA = N(6)-L-threonylcarbamoyladenosine(37) in tRNA + AMP + H(+). In terms of biological role, required for the formation of a threonylcarbamoyl group on adenosine at position 37 (t(6)A37) in tRNAs that read codons beginning with adenine. Is involved in the transfer of the threonylcarbamoyl moiety of threonylcarbamoyl-AMP (TC-AMP) to the N6 group of A37, together with TsaE and TsaB. TsaD likely plays a direct catalytic role in this reaction. The protein is tRNA N6-adenosine threonylcarbamoyltransferase of Prochlorococcus marinus (strain NATL1A).